Consider the following 262-residue polypeptide: Phenylalanine-4-hydroxylase (262 aa).

Residues His-121, His-126, and Glu-166 each coordinate Fe cation.

Belongs to the biopterin-dependent aromatic amino acid hydroxylase family. In terms of assembly, monomer. The cofactor is Fe(2+).

The enzyme catalyses (6R)-L-erythro-5,6,7,8-tetrahydrobiopterin + L-phenylalanine + O2 = (4aS,6R)-4a-hydroxy-L-erythro-5,6,7,8-tetrahydrobiopterin + L-tyrosine. It participates in amino-acid degradation; L-phenylalanine degradation; acetoacetate and fumarate from L-phenylalanine: step 1/6. The chain is Phenylalanine-4-hydroxylase (phhA) from Pseudomonas aeruginosa (strain ATCC 15692 / DSM 22644 / CIP 104116 / JCM 14847 / LMG 12228 / 1C / PRS 101 / PAO1).